A 229-amino-acid chain; its full sequence is NADH dehydrogenase [ubiquinone] iron-sulfur protein 8, mitochondrial (229 aa).

A mitochondrion-targeting transit peptide spans 1–41 (MAAILARKSLSALRSRQLVLAGHTIEGTNGYNRTLLGTRSF). 2 4Fe-4S ferredoxin-type domains span residues 121–150 (RRYA…IEAE) and 160–189 (TRYD…EGPN). Residues Cys130, Cys133, Cys136, Cys140, Cys169, Cys172, Cys175, and Cys179 each coordinate [4Fe-4S] cluster.

This sequence belongs to the complex I 23 kDa subunit family. As to quaternary structure, complex I is composed of about 45 different subunits. This is a component of the iron-sulfur (IP) fragment of the enzyme. [4Fe-4S] cluster serves as cofactor. Lowest expression found in storage tissues of tubers. Higher expression in older leaves than younger ones. Highest expression found in flowers.

It localises to the mitochondrion inner membrane. It carries out the reaction a ubiquinone + NADH + 5 H(+)(in) = a ubiquinol + NAD(+) + 4 H(+)(out). Core subunit of the mitochondrial membrane respiratory chain NADH dehydrogenase (Complex I) that is believed to belong to the minimal assembly required for catalysis. Complex I functions in the transfer of electrons from NADH to the respiratory chain. The immediate electron acceptor for the enzyme is believed to be ubiquinone. May donate electrons to ubiquinone. This Solanum tuberosum (Potato) protein is NADH dehydrogenase [ubiquinone] iron-sulfur protein 8, mitochondrial.